An 896-amino-acid polypeptide reads, in one-letter code: C-type lectin domain-containing protein 180 (896 aa).

An N-terminal signal peptide occupies residues 1 to 18 (MRHLIFTGFVLTLTALEA). Positions 54–178 (PWGDLYQFRA…CESTSPDHHA (125 aa)) constitute a C-type lectin domain. A glycan (N-linked (GlcNAc...) asparagine) is linked at asparagine 133. Cysteine 154 and cysteine 169 form a disulfide bridge. Residues asparagine 221 and asparagine 235 are each glycosylated (N-linked (GlcNAc...) asparagine). Disordered stretches follow at residues 243 to 264 (STVK…SVSK), 354 to 436 (VKQE…LAPE), 492 to 519 (EKLE…EEQK), and 557 to 809 (KVKA…TTKP). Positions 250–260 (SEEETSSEEEE) are enriched in acidic residues. Composition is skewed to basic and acidic residues over residues 354–382 (VKQE…KISE) and 395–406 (DMPKADIEPPKE). Residues 407-426 (EDCDEEGSGSGSGEEDEKDE) are compositionally biased toward acidic residues. The span at 427–436 (SSEKIELAPE) shows a compositional bias: basic and acidic residues. 3 stretches are compositionally biased toward basic and acidic residues: residues 575–590 (KSAK…KVGN), 607–663 (QNRE…ETKL), and 683–692 (EEPKSDKDSE). The segment covering 727-739 (STTTESTTVAVKE) has biased composition (low complexity). Residues 740–768 (VPVDEIEKIAKLEAKQHTEDEKVTVETKQ) are compositionally biased toward basic and acidic residues. A compositionally biased stretch (low complexity) spans 773 to 809 (TPAPTTSEKTSTTAAPSTKPAEETTTTTEAPSTTTKP).

It localises to the secreted. The protein is C-type lectin domain-containing protein 180 (clec-180) of Caenorhabditis elegans.